A 404-amino-acid polypeptide reads, in one-letter code: CCA-adding enzyme (404 aa).

Positions 27 and 30 each coordinate ATP. Positions 27 and 30 each coordinate CTP. Residues aspartate 40 and aspartate 42 each contribute to the Mg(2+) site. ATP-binding residues include arginine 111, aspartate 154, arginine 157, arginine 160, and arginine 163. The CTP site is built by arginine 111, aspartate 154, arginine 157, arginine 160, and arginine 163.

Belongs to the tRNA nucleotidyltransferase/poly(A) polymerase family. Bacterial CCA-adding enzyme type 3 subfamily. In terms of assembly, homodimer. The cofactor is Mg(2+).

It catalyses the reaction a tRNA precursor + 2 CTP + ATP = a tRNA with a 3' CCA end + 3 diphosphate. The catalysed reaction is a tRNA with a 3' CCA end + 2 CTP + ATP = a tRNA with a 3' CCACCA end + 3 diphosphate. Functionally, catalyzes the addition and repair of the essential 3'-terminal CCA sequence in tRNAs without using a nucleic acid template. Adds these three nucleotides in the order of C, C, and A to the tRNA nucleotide-73, using CTP and ATP as substrates and producing inorganic pyrophosphate. tRNA 3'-terminal CCA addition is required both for tRNA processing and repair. Also involved in tRNA surveillance by mediating tandem CCA addition to generate a CCACCA at the 3' terminus of unstable tRNAs. While stable tRNAs receive only 3'-terminal CCA, unstable tRNAs are marked with CCACCA and rapidly degraded. The structural flexibility of RNA controls the choice between CCA versus CCACCA addition: following the first CCA addition cycle, nucleotide-binding to the active site triggers a clockwise screw motion, producing torque on the RNA. This ejects stable RNAs, whereas unstable RNAs are refolded while bound to the enzyme and subjected to a second CCA catalytic cycle. This Geobacillus stearothermophilus (Bacillus stearothermophilus) protein is CCA-adding enzyme.